An 84-amino-acid polypeptide reads, in one-letter code: Large ribosomal subunit protein bL27 (84 aa).

A disordered region spans residues 1–22; sequence MAHKKAGGSTRNGRDSESKRLG.

Belongs to the bacterial ribosomal protein bL27 family.

The chain is Large ribosomal subunit protein bL27 from Shewanella denitrificans (strain OS217 / ATCC BAA-1090 / DSM 15013).